The following is a 114-amino-acid chain: U5-lycotoxin-Ls1a (114 aa).

An N-terminal signal peptide occupies residues 1–20 (MKYQILFGVVFLTLLSYCYS). Positions 21-45 (EIEDEFENFVDEEMVEADDPFSLAR) are excised as a propeptide. Cystine bridges form between C51/C66, C65/C93, and C77/C91.

It belongs to the neurotoxin 19 (CSTX) family. 04 (U1-Lctx) subfamily. In terms of tissue distribution, expressed by the venom gland.

It is found in the secreted. The chain is U5-lycotoxin-Ls1a from Lycosa singoriensis (Wolf spider).